Here is a 343-residue protein sequence, read N- to C-terminus: L-threonine 3-dehydrogenase (343 aa).

Residue Cys-38 participates in Zn(2+) binding. Active-site charge relay system residues include Thr-40 and His-43. The Zn(2+) site is built by His-63, Glu-64, Cys-93, Cys-96, Cys-99, and Cys-107. Residues Ile-175, Asp-195, Arg-200, 262–264 (LGL), and 286–287 (IY) each bind NAD(+).

This sequence belongs to the zinc-containing alcohol dehydrogenase family. As to quaternary structure, homotetramer. Zn(2+) is required as a cofactor.

The protein localises to the cytoplasm. The enzyme catalyses L-threonine + NAD(+) = (2S)-2-amino-3-oxobutanoate + NADH + H(+). It participates in amino-acid degradation; L-threonine degradation via oxydo-reductase pathway; glycine from L-threonine: step 1/2. Catalyzes the NAD(+)-dependent oxidation of L-threonine to 2-amino-3-ketobutyrate. This Saccharopolyspora erythraea (strain ATCC 11635 / DSM 40517 / JCM 4748 / NBRC 13426 / NCIMB 8594 / NRRL 2338) protein is L-threonine 3-dehydrogenase.